Reading from the N-terminus, the 283-residue chain is tRNA-cytidine(32) 2-sulfurtransferase (283 aa).

Positions 32–37 (SGGKDS) match the PP-loop motif motif. Cysteine 107, cysteine 110, and cysteine 198 together coordinate [4Fe-4S] cluster.

This sequence belongs to the TtcA family. In terms of assembly, homodimer. The cofactor is Mg(2+). [4Fe-4S] cluster is required as a cofactor.

Its subcellular location is the cytoplasm. The enzyme catalyses cytidine(32) in tRNA + S-sulfanyl-L-cysteinyl-[cysteine desulfurase] + AH2 + ATP = 2-thiocytidine(32) in tRNA + L-cysteinyl-[cysteine desulfurase] + A + AMP + diphosphate + H(+). The protein operates within tRNA modification. In terms of biological role, catalyzes the ATP-dependent 2-thiolation of cytidine in position 32 of tRNA, to form 2-thiocytidine (s(2)C32). The sulfur atoms are provided by the cysteine/cysteine desulfurase (IscS) system. The polypeptide is tRNA-cytidine(32) 2-sulfurtransferase (Sorangium cellulosum (strain So ce56) (Polyangium cellulosum (strain So ce56))).